Here is a 360-residue protein sequence, read N- to C-terminus: Transcription factor MYB39 (360 aa).

2 consecutive HTH myb-type domains span residues 10–62 (DKGV…MNYL) and 63–117 (RPDI…RKKL). 2 consecutive DNA-binding regions (H-T-H motif) follow at residues 38 to 62 (WRSL…MNYL) and 90 to 113 (WSKI…NTHM). The interval 299-324 (PSTGSVSVSPETTSLNHPSTAQHSSG) is disordered.

The protein localises to the nucleus. This chain is Transcription factor MYB39 (MYB39), found in Arabidopsis thaliana (Mouse-ear cress).